The primary structure comprises 68 residues: DNA gyrase inhibitor YacG (68 aa).

Zn(2+) is bound by residues Cys-10, Cys-13, Cys-29, and Cys-33.

Belongs to the DNA gyrase inhibitor YacG family. As to quaternary structure, interacts with GyrB. It depends on Zn(2+) as a cofactor.

Its function is as follows. Inhibits all the catalytic activities of DNA gyrase by preventing its interaction with DNA. Acts by binding directly to the C-terminal domain of GyrB, which probably disrupts DNA binding by the gyrase. The chain is DNA gyrase inhibitor YacG from Haemophilus influenzae (strain PittGG).